We begin with the raw amino-acid sequence, 278 residues long: Sulfur carrier protein FdhD (278 aa).

Cysteine 121 functions as the Cysteine persulfide intermediate in the catalytic mechanism. A Mo-bis(molybdopterin guanine dinucleotide)-binding site is contributed by phenylalanine 260–arginine 265.

This sequence belongs to the FdhD family.

The protein resides in the cytoplasm. In terms of biological role, required for formate dehydrogenase (FDH) activity. Acts as a sulfur carrier protein that transfers sulfur from IscS to the molybdenum cofactor prior to its insertion into FDH. In Salmonella choleraesuis (strain SC-B67), this protein is Sulfur carrier protein FdhD.